The following is a 317-amino-acid chain: Protein phosphatase PTC7 homolog fig (317 aa).

In terms of domain architecture, PPM-type phosphatase spans 46–312 (PYLVTVVQGR…DDITLILASV (267 aa)). The Mn(2+) site is built by Asp-90, Gly-91, and Asp-235.

The protein belongs to the PP2C family. Mg(2+) serves as cofactor. The cofactor is Mn(2+).

The enzyme catalyses O-phospho-L-seryl-[protein] + H2O = L-seryl-[protein] + phosphate. It carries out the reaction O-phospho-L-threonyl-[protein] + H2O = L-threonyl-[protein] + phosphate. The protein is Protein phosphatase PTC7 homolog fig of Drosophila erecta (Fruit fly).